Reading from the N-terminus, the 91-residue chain is Cell division topological specificity factor (91 aa).

The protein belongs to the MinE family.

Functionally, prevents the cell division inhibition by proteins MinC and MinD at internal division sites while permitting inhibition at polar sites. This ensures cell division at the proper site by restricting the formation of a division septum at the midpoint of the long axis of the cell. The polypeptide is Cell division topological specificity factor (Bradyrhizobium diazoefficiens (strain JCM 10833 / BCRC 13528 / IAM 13628 / NBRC 14792 / USDA 110)).